Here is a 286-residue protein sequence, read N- to C-terminus: tRNA (guanine-N(1)-)-methyltransferase (286 aa).

S-adenosyl-L-methionine contacts are provided by residues G116 and 140–145 (IGDYVL). Positions 232 to 286 (DALPPGSLTPHEEALAAEARLHAGRSAETPPPAGAAGSQAEGPPGTSPSDAAVAH) are disordered.

Belongs to the RNA methyltransferase TrmD family. In terms of assembly, homodimer.

Its subcellular location is the cytoplasm. The catalysed reaction is guanosine(37) in tRNA + S-adenosyl-L-methionine = N(1)-methylguanosine(37) in tRNA + S-adenosyl-L-homocysteine + H(+). Functionally, specifically methylates guanosine-37 in various tRNAs. This is tRNA (guanine-N(1)-)-methyltransferase from Acidothermus cellulolyticus (strain ATCC 43068 / DSM 8971 / 11B).